Consider the following 86-residue polypeptide: MTFEKKTVVDQFKVHATDTGSSEVQIAILTTRIKYLSDHFKKFPKDFASRVGFLKMIGQRRQLLDYLKKYNKDSYSSLIKRLYLRK.

The protein belongs to the universal ribosomal protein uS15 family. Part of the 30S ribosomal subunit. Forms a bridge to the 50S subunit in the 70S ribosome, contacting the 23S rRNA.

Functionally, one of the primary rRNA binding proteins, it binds directly to 16S rRNA where it helps nucleate assembly of the platform of the 30S subunit by binding and bridging several RNA helices of the 16S rRNA. In terms of biological role, forms an intersubunit bridge (bridge B4) with the 23S rRNA of the 50S subunit in the ribosome. This Endomicrobium trichonymphae protein is Small ribosomal subunit protein uS15.